We begin with the raw amino-acid sequence, 496 residues long: Glutamyl-tRNA(Gln) amidotransferase subunit A (496 aa).

Catalysis depends on charge relay system residues Lys75 and Ser150. Ser174 serves as the catalytic Acyl-ester intermediate.

The protein belongs to the amidase family. GatA subfamily. As to quaternary structure, heterotrimer of A, B and C subunits.

It catalyses the reaction L-glutamyl-tRNA(Gln) + L-glutamine + ATP + H2O = L-glutaminyl-tRNA(Gln) + L-glutamate + ADP + phosphate + H(+). Functionally, allows the formation of correctly charged Gln-tRNA(Gln) through the transamidation of misacylated Glu-tRNA(Gln) in organisms which lack glutaminyl-tRNA synthetase. The reaction takes place in the presence of glutamine and ATP through an activated gamma-phospho-Glu-tRNA(Gln). The polypeptide is Glutamyl-tRNA(Gln) amidotransferase subunit A (Burkholderia mallei (strain NCTC 10247)).